A 357-amino-acid polypeptide reads, in one-letter code: Glutamate 5-kinase (357 aa).

Lys7 lines the ATP pocket. 3 residues coordinate substrate: Ser43, Asp130, and Asn142. 162–163 (TD) lines the ATP pocket. The 78-residue stretch at 270–347 (QGELTLDAGA…PAAGPSPVVV (78 aa)) folds into the PUA domain.

Belongs to the glutamate 5-kinase family.

It localises to the cytoplasm. The enzyme catalyses L-glutamate + ATP = L-glutamyl 5-phosphate + ADP. It participates in amino-acid biosynthesis; L-proline biosynthesis; L-glutamate 5-semialdehyde from L-glutamate: step 1/2. Catalyzes the transfer of a phosphate group to glutamate to form L-glutamate 5-phosphate. This chain is Glutamate 5-kinase, found in Parasynechococcus marenigrum (strain WH8102).